Reading from the N-terminus, the 202-residue chain is Na(+)-translocating NADH-quinone reductase subunit E (202 aa).

Helical transmembrane passes span 11–31 (SVFI…FLAM), 35–55 (INAA…TVPA), 81–101 (FLSF…MEMV), 114–134 (GVFL…LFMV), 144–164 (VVYG…LAGI), and 180–200 (LGIT…FGGI).

Belongs to the NqrDE/RnfAE family. Composed of six subunits; NqrA, NqrB, NqrC, NqrD, NqrE and NqrF.

The protein resides in the cell inner membrane. It catalyses the reaction a ubiquinone + n Na(+)(in) + NADH + H(+) = a ubiquinol + n Na(+)(out) + NAD(+). Functionally, NQR complex catalyzes the reduction of ubiquinone-1 to ubiquinol by two successive reactions, coupled with the transport of Na(+) ions from the cytoplasm to the periplasm. NqrA to NqrE are probably involved in the second step, the conversion of ubisemiquinone to ubiquinol. The polypeptide is Na(+)-translocating NADH-quinone reductase subunit E (Cellvibrio japonicus (strain Ueda107) (Pseudomonas fluorescens subsp. cellulosa)).